The sequence spans 547 residues: CTP synthase (547 aa).

An amidoligase domain region spans residues 1 to 265 (MARYVFITGG…DQAVLDAFGI (265 aa)). Residue Ser-13 participates in CTP binding. Ser-13 contributes to the UTP binding site. Residues 14 to 19 (SLGKGL) and Asp-71 contribute to the ATP site. 2 residues coordinate Mg(2+): Asp-71 and Glu-139. CTP contacts are provided by residues 146 to 148 (DIE), 186 to 191 (KTKPTQ), and Lys-222. UTP is bound by residues 186-191 (KTKPTQ) and Lys-222. The 256-residue stretch at 291–546 (RVAIVGKYTQ…VRAAVEVSRL (256 aa)) folds into the Glutamine amidotransferase type-1 domain. Residue Gly-353 coordinates L-glutamine. Cys-380 acts as the Nucleophile; for glutamine hydrolysis in catalysis. L-glutamine-binding positions include 381-384 (LGMQ), Glu-404, and Arg-474. Residues His-519 and Glu-521 contribute to the active site.

It belongs to the CTP synthase family. Homotetramer.

The catalysed reaction is UTP + L-glutamine + ATP + H2O = CTP + L-glutamate + ADP + phosphate + 2 H(+). The enzyme catalyses L-glutamine + H2O = L-glutamate + NH4(+). It carries out the reaction UTP + NH4(+) + ATP = CTP + ADP + phosphate + 2 H(+). Its pathway is pyrimidine metabolism; CTP biosynthesis via de novo pathway; CTP from UDP: step 2/2. Allosterically activated by GTP, when glutamine is the substrate; GTP has no effect on the reaction when ammonia is the substrate. The allosteric effector GTP functions by stabilizing the protein conformation that binds the tetrahedral intermediate(s) formed during glutamine hydrolysis. Inhibited by the product CTP, via allosteric rather than competitive inhibition. Catalyzes the ATP-dependent amination of UTP to CTP with either L-glutamine or ammonia as the source of nitrogen. Regulates intracellular CTP levels through interactions with the four ribonucleotide triphosphates. The chain is CTP synthase from Cereibacter sphaeroides (strain ATCC 17023 / DSM 158 / JCM 6121 / CCUG 31486 / LMG 2827 / NBRC 12203 / NCIMB 8253 / ATH 2.4.1.) (Rhodobacter sphaeroides).